A 227-amino-acid polypeptide reads, in one-letter code: 7-cyano-7-deazaguanine synthase (227 aa).

Position 16–26 (16–26 (FSGGQDSTTCL)) interacts with ATP. Residues Cys-194, Cys-202, Cys-205, and Cys-208 each contribute to the Zn(2+) site.

This sequence belongs to the QueC family. It depends on Zn(2+) as a cofactor.

It catalyses the reaction 7-carboxy-7-deazaguanine + NH4(+) + ATP = 7-cyano-7-deazaguanine + ADP + phosphate + H2O + H(+). It functions in the pathway purine metabolism; 7-cyano-7-deazaguanine biosynthesis. In terms of biological role, catalyzes the ATP-dependent conversion of 7-carboxy-7-deazaguanine (CDG) to 7-cyano-7-deazaguanine (preQ(0)). In Haemophilus influenzae (strain 86-028NP), this protein is 7-cyano-7-deazaguanine synthase.